Consider the following 308-residue polypeptide: MKFLWAALVVTLLAGCRADVEEEVKLGQEPDRWQAKQPWEQALGRFWEYLRWVQTLSNKVKEELLNSQVTEELKLLIEETMKEVKAYKEELEKQVGPIAQETQARLSKELQAAQARLESDMEDVRTRLAQYRSEAQAALGQNTDDLQGRLASHLRKLRKRLLRDAEDLQKRLAVYQAGTHEAAERGVSAIHERLGPLMMEGPLQAIPPSQQLRERAEAWGQKVRGRLESVGSQARDRLDDMRDQMEELKAKVEEQASQVRLQAEAFQTRLKSWFEPLVQDMQRQWASLVEKVQSTLGISPSTKPSKTK.

Positions 1-18 (MKFLWAALVVTLLAGCRA) are cleaved as a signal peptide. A run of 8 repeats spans residues 75-96 (LLIE…KQVG), 97-118 (PIAQ…ARLE), 119-140 (SDME…AALG), 141-162 (QNTD…KRLL), 163-184 (RDAE…EAAE), 185-206 (RGVS…LQAI), 207-224 (PPSQ…QKVR), and 225-246 (GRLE…DQME). Residues 75-246 (LLIEETMKEV…RLDDMRDQME (172 aa)) are 8 X 22 AA approximate tandem repeats. Residues 153–163 (HLRKLRKRLLR) are LDL and other lipoprotein receptors binding. 157 to 160 (LRKR) serves as a coordination point for heparin. The tract at residues 205 to 281 (AIPPSQQLRE…SWFEPLVQDM (77 aa)) is lipid-binding and lipoprotein association. A heparin-binding site is contributed by 220–227 (GQKVRGRL). The segment at 257–308 (SQVRLQAEAFQTRLKSWFEPLVQDMQRQWASLVEKVQSTLGISPSTKPSKTK) is homooligomerization. A specificity for association with VLDL region spans residues 269–281 (RLKSWFEPLVQDM).

Belongs to the apolipoprotein A1/A4/E family. Homotetramer. May interact with ABCA1; functionally associated with ABCA1 in the biogenesis of HDLs. May interact with APP/A4 amyloid-beta peptide; the interaction is extremely stable in vitro but its physiological significance is unclear. May interact with MAPT. May interact with MAP2. In the cerebrospinal fluid, interacts with secreted SORL1. Interacts with PMEL; this allows the loading of PMEL luminal fragment on ILVs to induce fibril nucleation. Post-translationally, APOE exists as multiple glycosylated and sialylated glycoforms within cells and in plasma. The extent of glycosylation and sialylation are tissue and context specific. In terms of processing, glycated in plasma VLDL. Phosphorylated by FAM20C in the extracellular medium.

It localises to the secreted. It is found in the extracellular space. The protein resides in the extracellular matrix. The protein localises to the extracellular vesicle. Its subcellular location is the endosome. It localises to the multivesicular body. APOE is an apolipoprotein, a protein associating with lipid particles, that mainly functions in lipoprotein-mediated lipid transport between organs via the plasma and interstitial fluids. APOE is a core component of plasma lipoproteins and is involved in their production, conversion and clearance. Apolipoproteins are amphipathic molecules that interact both with lipids of the lipoprotein particle core and the aqueous environment of the plasma. As such, APOE associates with chylomicrons, chylomicron remnants, very low density lipoproteins (VLDL) and intermediate density lipoproteins (IDL) but shows a preferential binding to high-density lipoproteins (HDL). It also binds a wide range of cellular receptors including the LDL receptor/LDLR and the very low-density lipoprotein receptor/VLDLR that mediate the cellular uptake of the APOE-containing lipoprotein particles. Finally, APOE also has a heparin-binding activity and binds heparan-sulfate proteoglycans on the surface of cells, a property that supports the capture and the receptor-mediated uptake of APOE-containing lipoproteins by cells. This chain is Apolipoprotein E (APOE), found in Pteropus pselaphon (Bonin flying fox).